Here is a 534-residue protein sequence, read N- to C-terminus: UDP-glucuronosyltransferase 1A5 (534 aa).

The signal sequence occupies residues Met1 to Ser28. Asn119, Asn296, and Asn348 each carry an N-linked (GlcNAc...) asparagine glycan. Residues Val492–Phe508 form a helical membrane-spanning segment.

Belongs to the UDP-glycosyltransferase family. Homodimer. Homooligomer. Interacts with UGT1A1, UGT1A3, UGT1A4, UGT1A6, UGT1A7, UGT1A8, UGT1A9 and UGT1A10 to form heterodimers. Isoform 1 interacts with isoform 2/i2 suggesting that oligomerization is involved in negative regulation of transferase activity by isoform 2. Isoform 1 also interacts with respective i2 isoforms of UGT1A1, UGT1A3, UGT1A4, UGT1A6, UGT1A7, UGT1A8, UGT1A9 and UGT1A10. In terms of tissue distribution, isoform 1 and isoform 2 are expressed in colon and small intestine. Neither isoform is expressed in liver, kidney or esophagus.

The protein localises to the endoplasmic reticulum membrane. The catalysed reaction is glucuronate acceptor + UDP-alpha-D-glucuronate = acceptor beta-D-glucuronoside + UDP + H(+). It catalyses the reaction zolasartan + UDP-alpha-D-glucuronate = zolarsartan-1-N-beta-D-glucuronide + UDP. UDP-glucuronosyltransferase (UGT) that catalyzes phase II biotransformation reactions in which lipophilic substrates are conjugated with glucuronic acid to increase the metabolite's water solubility, thereby facilitating excretion into either the urine or bile. Essential for the elimination and detoxification of drugs, xenobiotics and endogenous compounds. Involved in the glucuronidation of the AGTR1 angiotensin receptor antagonist zolarsatan, a drug which can inhibit the effect of angiotensin II. Its function is as follows. Lacks UGT glucuronidation activity but acts as a negative regulator of isoform 1. This is UDP-glucuronosyltransferase 1A5 from Homo sapiens (Human).